The primary structure comprises 406 residues: Peptidase T (406 aa).

His-77 lines the Zn(2+) pocket. Asp-79 is an active-site residue. A Zn(2+)-binding site is contributed by Asp-139. Glu-173 serves as the catalytic Proton acceptor. Glu-174, Asp-196, and His-377 together coordinate Zn(2+).

The protein belongs to the peptidase M20B family. It depends on Zn(2+) as a cofactor.

Its subcellular location is the cytoplasm. The enzyme catalyses Release of the N-terminal residue from a tripeptide.. In terms of biological role, cleaves the N-terminal amino acid of tripeptides. The sequence is that of Peptidase T from Parabacteroides distasonis (strain ATCC 8503 / DSM 20701 / CIP 104284 / JCM 5825 / NCTC 11152).